The following is a 433-amino-acid chain: uncharacterized protein (433 aa).

The protein resides in the virion. This is an uncharacterized protein from Acanthamoeba polyphaga (Amoeba).